The following is a 451-amino-acid chain: Tubulin alpha chain (451 aa).

Residue Gln11 coordinates GTP. Lys40 carries the post-translational modification N6-acetyllysine. Positions 71, 144, 145, 179, 206, and 228 each coordinate GTP. Position 71 (Glu71) interacts with Mg(2+). Glu254 is an active-site residue.

It belongs to the tubulin family. Dimer of alpha and beta chains. A typical microtubule is a hollow water-filled tube with an outer diameter of 25 nm and an inner diameter of 15 nM. Alpha-beta heterodimers associate head-to-tail to form protofilaments running lengthwise along the microtubule wall with the beta-tubulin subunit facing the microtubule plus end conferring a structural polarity. Microtubules usually have 13 protofilaments but different protofilament numbers can be found in some organisms and specialized cells. Mg(2+) is required as a cofactor. In terms of processing, undergoes a tyrosination/detyrosination cycle, the cyclic removal and re-addition of a C-terminal tyrosine residue by the enzymes tubulin tyrosine carboxypeptidase (TTCP) and tubulin tyrosine ligase (TTL), respectively. Acetylation of alpha chains at Lys-40 stabilizes microtubules and affects affinity and processivity of microtubule motors. This modification has a role in multiple cellular functions, ranging from cell motility, cell cycle progression or cell differentiation to intracellular trafficking and signaling.

It localises to the cytoplasm. The protein localises to the cytoskeleton. It carries out the reaction GTP + H2O = GDP + phosphate + H(+). In terms of biological role, tubulin is the major constituent of microtubules, a cylinder consisting of laterally associated linear protofilaments composed of alpha- and beta-tubulin heterodimers. Microtubules grow by the addition of GTP-tubulin dimers to the microtubule end, where a stabilizing cap forms. Below the cap, tubulin dimers are in GDP-bound state, owing to GTPase activity of alpha-tubulin. This is Tubulin alpha chain (TUBA) from Euglena gracilis.